Consider the following 520-residue polypeptide: ATP-dependent RNA helicase CshA (520 aa).

Residues 2-30 (TKFSEFGLDEKIVKSVNRMGFEEATPIQE) carry the Q motif motif. The region spanning 33 to 203 (IPLGLEGKDL…ERFMHSPELI (171 aa)) is the Helicase ATP-binding domain. ATP is bound at residue 46–53 (AQTGTGKT). Residues 151–154 (DEAD) carry the DEAD box motif. The Helicase C-terminal domain occupies 214 to 374 (LIEQFFVKVH…PLQAPTWDEA (161 aa)). Positions 428-439 (KTPVHITEERPL) are enriched in basic and acidic residues. Positions 428 to 520 (KTPVHITEER…NKGNYSQKSK (93 aa)) are disordered. 2 stretches are compositionally biased toward gly residues: residues 442–468 (RGGG…GKGG) and 482–496 (SGGG…GGGG).

It belongs to the DEAD box helicase family. CshA subfamily. As to quaternary structure, oligomerizes, may be a member of the RNA degradosome.

It localises to the cytoplasm. It carries out the reaction ATP + H2O = ADP + phosphate + H(+). In terms of biological role, DEAD-box RNA helicase possibly involved in RNA degradation. Unwinds dsRNA in both 5'- and 3'-directions, has RNA-dependent ATPase activity. Involved in cold tolerance, motility and alcohol tolerance. The chain is ATP-dependent RNA helicase CshA from Listeria monocytogenes serovar 1/2a (strain ATCC BAA-679 / EGD-e).